Here is a 177-residue protein sequence, read N- to C-terminus: Adenine phosphoribosyltransferase (177 aa).

The protein belongs to the purine/pyrimidine phosphoribosyltransferase family. As to quaternary structure, homodimer.

It localises to the cytoplasm. It carries out the reaction AMP + diphosphate = 5-phospho-alpha-D-ribose 1-diphosphate + adenine. The protein operates within purine metabolism; AMP biosynthesis via salvage pathway; AMP from adenine: step 1/1. In terms of biological role, catalyzes a salvage reaction resulting in the formation of AMP, that is energically less costly than de novo synthesis. In Chlorobium phaeobacteroides (strain BS1), this protein is Adenine phosphoribosyltransferase.